Here is a 358-residue protein sequence, read N- to C-terminus: MRFSQLIAVLKNGDAGVLSTSEGRDPELRGAASLERATADQLSFLEKGNALVGSLESSEAGAVLIPDQQELRELAERLQLAWAVCGDPRLAFAEALEQLHPKPSPQAGIHASAVIADRVQLGAGVSIGARVCIGDDTRIGPRTVIHPGVVIYGNVDIGEGCELHANAVLHPGSRIGDRCVVHSNAVVGSEGFGFVPTAKGWRKMPQTGLVVLEDGVEVGCGSTIDRPSVGETRIGSGTKIDNLVQIGHGVVTGRGCALASQVGIAGGAQLGHGVILAGQVGVANRAVIGDRAIASSKSGIHGEVAAGEVVSGYPAIPNRLWLRCSAAFSKLPEMAKQLRELKKQVSSEATGGSIEADQ.

His-248 (proton acceptor) is an active-site residue.

This sequence belongs to the transferase hexapeptide repeat family. LpxD subfamily. In terms of assembly, homotrimer.

It catalyses the reaction a UDP-3-O-[(3R)-3-hydroxyacyl]-alpha-D-glucosamine + a (3R)-hydroxyacyl-[ACP] = a UDP-2-N,3-O-bis[(3R)-3-hydroxyacyl]-alpha-D-glucosamine + holo-[ACP] + H(+). The protein operates within bacterial outer membrane biogenesis; LPS lipid A biosynthesis. In terms of biological role, catalyzes the N-acylation of UDP-3-O-acylglucosamine using 3-hydroxyacyl-ACP as the acyl donor. Is involved in the biosynthesis of lipid A, a phosphorylated glycolipid that anchors the lipopolysaccharide to the outer membrane of the cell. This chain is UDP-3-O-acylglucosamine N-acyltransferase, found in Synechococcus sp. (strain WH7803).